We begin with the raw amino-acid sequence, 393 residues long: NAD(P)H-quinone oxidoreductase subunit H, chloroplastic (393 aa).

This sequence belongs to the complex I 49 kDa subunit family. NDH is composed of at least 16 different subunits, 5 of which are encoded in the nucleus.

It is found in the plastid. Its subcellular location is the chloroplast thylakoid membrane. The catalysed reaction is a plastoquinone + NADH + (n+1) H(+)(in) = a plastoquinol + NAD(+) + n H(+)(out). The enzyme catalyses a plastoquinone + NADPH + (n+1) H(+)(in) = a plastoquinol + NADP(+) + n H(+)(out). Its function is as follows. NDH shuttles electrons from NAD(P)H:plastoquinone, via FMN and iron-sulfur (Fe-S) centers, to quinones in the photosynthetic chain and possibly in a chloroplast respiratory chain. The immediate electron acceptor for the enzyme in this species is believed to be plastoquinone. Couples the redox reaction to proton translocation, and thus conserves the redox energy in a proton gradient. In Carica papaya (Papaya), this protein is NAD(P)H-quinone oxidoreductase subunit H, chloroplastic.